The chain runs to 558 residues: N-terminal histidine N-methyltransferase (558 aa).

At Met1–Lys15 the chain is on the cytoplasmic side. A helical membrane pass occupies residues Leu16–Val32. Residues Phe33–Phe49 lie on the Lumenal side of the membrane. A helical transmembrane segment spans residues His50–Lys65. Topologically, residues Asp66–Ile77 are cytoplasmic. A helical transmembrane segment spans residues Tyr78–Gln96. Residues Gln97–Pro104 are Lumenal-facing. A helical transmembrane segment spans residues Ala105–Gln131. The Cytoplasmic portion of the chain corresponds to Ala132–Glu145. Residues His146–Arg169 form a helical membrane-spanning segment. The Lumenal portion of the chain corresponds to Phe170–Gly172. Residues Ser173 to Val194 traverse the membrane as a helical segment. The Cytoplasmic segment spans residues Pro195–Lys197. A helical transmembrane segment spans residues Ala198 to His215. Residues Leu216–Trp558 lie on the Lumenal side of the membrane.

It belongs to the methyltransferase superfamily.

Its subcellular location is the endoplasmic reticulum membrane. It carries out the reaction L-histidyl-[protein] + S-adenosyl-L-methionine = N(tele)-methyl-L-histidyl-[protein] + S-adenosyl-L-homocysteine + H(+). In terms of biological role, protein-histidine N-methyltransferase that specifically mediates 3-methylhistidine (tele-methylhistidine) methylation at 'His-1', which protects the side-chain from oxidative damage. Methylates lytic polysaccharide monooxygenases (LPMOs) destined for secretion, including AN4702. The chain is N-terminal histidine N-methyltransferase from Emericella nidulans (strain FGSC A4 / ATCC 38163 / CBS 112.46 / NRRL 194 / M139) (Aspergillus nidulans).